We begin with the raw amino-acid sequence, 273 residues long: NADPH-dependent 7-cyano-7-deazaguanine reductase (273 aa).

80–82 contacts substrate; that stretch reads VES. 82–83 contributes to the NADPH binding site; that stretch reads SK. C180 functions as the Thioimide intermediate in the catalytic mechanism. D187 functions as the Proton donor in the catalytic mechanism. 219 to 220 provides a ligand contact to substrate; the sequence is HE. 248-249 provides a ligand contact to NADPH; sequence RG.

This sequence belongs to the GTP cyclohydrolase I family. QueF type 2 subfamily. Homodimer.

Its subcellular location is the cytoplasm. The catalysed reaction is 7-aminomethyl-7-carbaguanine + 2 NADP(+) = 7-cyano-7-deazaguanine + 2 NADPH + 3 H(+). It participates in tRNA modification; tRNA-queuosine biosynthesis. In terms of biological role, catalyzes the NADPH-dependent reduction of 7-cyano-7-deazaguanine (preQ0) to 7-aminomethyl-7-deazaguanine (preQ1). This is NADPH-dependent 7-cyano-7-deazaguanine reductase from Bordetella pertussis (strain Tohama I / ATCC BAA-589 / NCTC 13251).